The following is a 520-amino-acid chain: Putative hydrolase Mb2247c (520 aa).

Residues 1–34 (MAAMWRRRPLSSALLSFGLLLGGLPLAAPPLAGA) form the signal peptide. A helical transmembrane segment spans residues 104 to 124 (FGALLVNPGGPGASAVDMVAA). One can recognise an AB hydrolase-1 domain in the interval 105 to 403 (GALLVNPGGP…APTPADPAAW (299 aa)). S232 functions as the Nucleophile in the catalytic mechanism. The active site involves D461. The active-site Proton donor is the H488.

It belongs to the peptidase S33 family.

It localises to the cell membrane. This is Putative hydrolase Mb2247c from Mycobacterium bovis (strain ATCC BAA-935 / AF2122/97).